We begin with the raw amino-acid sequence, 1085 residues long: Error-prone DNA polymerase (1085 aa).

Belongs to the DNA polymerase type-C family. DnaE2 subfamily.

It is found in the cytoplasm. The catalysed reaction is DNA(n) + a 2'-deoxyribonucleoside 5'-triphosphate = DNA(n+1) + diphosphate. In terms of biological role, DNA polymerase involved in damage-induced mutagenesis and translesion synthesis (TLS). It is not the major replicative DNA polymerase. The chain is Error-prone DNA polymerase from Symbiobacterium thermophilum (strain DSM 24528 / JCM 14929 / IAM 14863 / T).